Consider the following 234-residue polypeptide: Large ribosomal subunit protein uL1 (234 aa).

Belongs to the universal ribosomal protein uL1 family. In terms of assembly, part of the 50S ribosomal subunit.

In terms of biological role, binds directly to 23S rRNA. The L1 stalk is quite mobile in the ribosome, and is involved in E site tRNA release. Functionally, protein L1 is also a translational repressor protein, it controls the translation of the L11 operon by binding to its mRNA. The polypeptide is Large ribosomal subunit protein uL1 (Aliivibrio fischeri (strain ATCC 700601 / ES114) (Vibrio fischeri)).